The chain runs to 837 residues: Protein translocase subunit SecA (837 aa).

ATP contacts are provided by residues Gln-85, 103–107 (GEGKT), and Asp-493. The Zn(2+) site is built by Cys-821, Cys-823, Cys-832, and His-833.

Belongs to the SecA family. As to quaternary structure, monomer and homodimer. Part of the essential Sec protein translocation apparatus which comprises SecA, SecYEG and auxiliary proteins SecDF. Other proteins may also be involved. Zn(2+) is required as a cofactor.

It localises to the cell membrane. The protein localises to the cytoplasm. It carries out the reaction ATP + H2O + cellular proteinSide 1 = ADP + phosphate + cellular proteinSide 2.. Part of the Sec protein translocase complex. Interacts with the SecYEG preprotein conducting channel. Has a central role in coupling the hydrolysis of ATP to the transfer of proteins into and across the cell membrane, serving as an ATP-driven molecular motor driving the stepwise translocation of polypeptide chains across the membrane. The chain is Protein translocase subunit SecA from Streptococcus pneumoniae serotype 19F (strain G54).